Reading from the N-terminus, the 187-residue chain is Calcium and integrin-binding family member 3 (187 aa).

EF-hand domains lie at 66-101 (KDNP…MSEM), 103-138 (PRDL…LTRG), and 144-179 (EVSL…APDF). Ca(2+)-binding residues include Asp116, Asn118, Asp120, Tyr122, Asp127, Asp157, Asp159, Asp161, Arg163, and Asp168.

Monomer and homodimer. Interacts with ITGA2B (via C-terminus cytoplasmic tail region); the interaction is stabilized/increased in a calcium and magnesium-dependent manner. Interacts with TMC1.

Its function is as follows. Acts a an auxiliary subunit of the sensory mechanoelectrical transduction (MET) channel in hair cells. Plays a role in regulating hair cell MET channel localization and function. In Homo sapiens (Human), this protein is Calcium and integrin-binding family member 3 (CIB3).